Reading from the N-terminus, the 498-residue chain is ATP synthase subunit beta, chloroplastic (498 aa).

172 to 179 (GGAGVGKT) provides a ligand contact to ATP.

It belongs to the ATPase alpha/beta chains family. F-type ATPases have 2 components, CF(1) - the catalytic core - and CF(0) - the membrane proton channel. CF(1) has five subunits: alpha(3), beta(3), gamma(1), delta(1), epsilon(1). CF(0) has four main subunits: a(1), b(1), b'(1) and c(9-12).

The protein resides in the plastid. The protein localises to the chloroplast thylakoid membrane. It catalyses the reaction ATP + H2O + 4 H(+)(in) = ADP + phosphate + 5 H(+)(out). In terms of biological role, produces ATP from ADP in the presence of a proton gradient across the membrane. The catalytic sites are hosted primarily by the beta subunits. The polypeptide is ATP synthase subunit beta, chloroplastic (Lactuca sativa (Garden lettuce)).